Reading from the N-terminus, the 441-residue chain is Enolase (441 aa).

Gln-164 is a binding site for (2R)-2-phosphoglycerate. Glu-206 acts as the Proton donor in catalysis. The Mg(2+) site is built by Asp-243, Glu-289, and Asp-316. Residues Lys-341, Arg-370, Ser-371, and Lys-392 each coordinate (2R)-2-phosphoglycerate. The active-site Proton acceptor is Lys-341.

The protein belongs to the enolase family. It depends on Mg(2+) as a cofactor.

It localises to the cytoplasm. The protein localises to the secreted. Its subcellular location is the cell surface. It catalyses the reaction (2R)-2-phosphoglycerate = phosphoenolpyruvate + H2O. It functions in the pathway carbohydrate degradation; glycolysis; pyruvate from D-glyceraldehyde 3-phosphate: step 4/5. Functionally, catalyzes the reversible conversion of 2-phosphoglycerate (2-PG) into phosphoenolpyruvate (PEP). It is essential for the degradation of carbohydrates via glycolysis. In Leuconostoc mesenteroides subsp. mesenteroides (strain ATCC 8293 / DSM 20343 / BCRC 11652 / CCM 1803 / JCM 6124 / NCDO 523 / NBRC 100496 / NCIMB 8023 / NCTC 12954 / NRRL B-1118 / 37Y), this protein is Enolase.